Reading from the N-terminus, the 123-residue chain is Small ribosomal subunit protein uS12 (123 aa).

Aspartate 89 is modified (3-methylthioaspartic acid). Positions 101 to 123 (SLDTSGVKDRKQGRSKYGAKRPK) are disordered. Basic residues predominate over residues 113 to 123 (GRSKYGAKRPK).

Belongs to the universal ribosomal protein uS12 family. As to quaternary structure, part of the 30S ribosomal subunit. Contacts proteins S8 and S17. May interact with IF1 in the 30S initiation complex.

With S4 and S5 plays an important role in translational accuracy. Its function is as follows. Interacts with and stabilizes bases of the 16S rRNA that are involved in tRNA selection in the A site and with the mRNA backbone. Located at the interface of the 30S and 50S subunits, it traverses the body of the 30S subunit contacting proteins on the other side and probably holding the rRNA structure together. The combined cluster of proteins S8, S12 and S17 appears to hold together the shoulder and platform of the 30S subunit. The protein is Small ribosomal subunit protein uS12 of Azotobacter vinelandii (strain DJ / ATCC BAA-1303).